The chain runs to 497 residues: Guanosine-5'-triphosphate,3'-diphosphate pyrophosphatase (497 aa).

This sequence belongs to the GppA/Ppx family. GppA subfamily.

The catalysed reaction is guanosine 3'-diphosphate 5'-triphosphate + H2O = guanosine 3',5'-bis(diphosphate) + phosphate + H(+). It participates in purine metabolism; ppGpp biosynthesis; ppGpp from GTP: step 2/2. Its function is as follows. Catalyzes the conversion of pppGpp to ppGpp. Guanosine pentaphosphate (pppGpp) is a cytoplasmic signaling molecule which together with ppGpp controls the 'stringent response', an adaptive process that allows bacteria to respond to amino acid starvation, resulting in the coordinated regulation of numerous cellular activities. The polypeptide is Guanosine-5'-triphosphate,3'-diphosphate pyrophosphatase (Aliivibrio fischeri (strain MJ11) (Vibrio fischeri)).